The primary structure comprises 218 residues: Ribose-5-phosphate isomerase A (218 aa).

Residues 28–31 (TGST), 81–84 (DSAD), and 94–97 (KGKG) contribute to the substrate site. Glutamate 103 acts as the Proton acceptor in catalysis. Residue lysine 121 participates in substrate binding.

Belongs to the ribose 5-phosphate isomerase family. Homodimer.

The enzyme catalyses aldehydo-D-ribose 5-phosphate = D-ribulose 5-phosphate. It participates in carbohydrate degradation; pentose phosphate pathway; D-ribose 5-phosphate from D-ribulose 5-phosphate (non-oxidative stage): step 1/1. Catalyzes the reversible conversion of ribose-5-phosphate to ribulose 5-phosphate. The chain is Ribose-5-phosphate isomerase A from Blochmanniella pennsylvanica (strain BPEN).